Here is a 513-residue protein sequence, read N- to C-terminus: Lysine--tRNA ligase (513 aa).

2 residues coordinate Mg(2+): E423 and E430.

It belongs to the class-II aminoacyl-tRNA synthetase family. As to quaternary structure, homodimer. Requires Mg(2+) as cofactor.

It is found in the cytoplasm. It catalyses the reaction tRNA(Lys) + L-lysine + ATP = L-lysyl-tRNA(Lys) + AMP + diphosphate. This Anaeromyxobacter dehalogenans (strain 2CP-C) protein is Lysine--tRNA ligase.